The chain runs to 314 residues: Ribosomal RNA small subunit methyltransferase H (314 aa).

Residues Gly36–His38, Asp56, Phe83, Asp104, and Gln111 each bind S-adenosyl-L-methionine.

This sequence belongs to the methyltransferase superfamily. RsmH family.

The protein localises to the cytoplasm. It catalyses the reaction cytidine(1402) in 16S rRNA + S-adenosyl-L-methionine = N(4)-methylcytidine(1402) in 16S rRNA + S-adenosyl-L-homocysteine + H(+). Specifically methylates the N4 position of cytidine in position 1402 (C1402) of 16S rRNA. This chain is Ribosomal RNA small subunit methyltransferase H, found in Syntrophotalea carbinolica (strain DSM 2380 / NBRC 103641 / GraBd1) (Pelobacter carbinolicus).